The primary structure comprises 414 residues: N-carbamoyl-L-amino-acid amidohydrolase (414 aa).

The a divalent metal cation site is built by H83, D94, E129, and H195. Q198, H231, N281, R294, and G363 together coordinate an N-carbamoyl-L-alpha-amino acid. The involved in dimerization stretch occupies residues 214-333; that stretch reads GIAGPSWFKV…QIEKNMAAVP (120 aa). H388 provides a ligand contact to a divalent metal cation.

Belongs to the peptidase M20 family. Homodimer. Mn(2+) is required as a cofactor. Requires Ni(2+) as cofactor. It depends on Co(2+) as a cofactor. The cofactor is Fe(2+).

The catalysed reaction is an N-carbamoyl-L-alpha-amino acid + H2O + 2 H(+) = an L-alpha-amino acid + NH4(+) + CO2. It carries out the reaction N-carbamoyl-L-methionine + H2O + 2 H(+) = L-methionine + NH4(+) + CO2. Catalyzes the hydrolysis of N-carbamoyl-L-alpha-amino acids to free L-alpha-amino acids. Is strictly L-specific since it is inactive toward N-carbamoyl-D-alpha-amino acids. The polypeptide is N-carbamoyl-L-amino-acid amidohydrolase (Pseudomonas sp. (strain NS671)).